Here is a 788-residue protein sequence, read N- to C-terminus: Protein TRS1 (788 aa).

Disordered stretches follow at residues M1 to H82 and I610 to V663. Positions R16–G25 are enriched in gly residues. The span at V26–G56 shows a compositional bias: low complexity. The interval S74–Y248 is RNA-binding. Positions L651–P660 are enriched in basic and acidic residues. The tract at residues L672–A788 is interaction with host EIF2AK2/PKR.

This sequence belongs to the herpesviridae US22 family. In terms of assembly, interacts with host EIF2AK2/PKR; this interaction retains EIF2AK2 to the host nucleus and prevents its activation. Interaction (via N-terminus) with host BECN1; this interaction inhibits host autophagy. Interacts with the viral DNA polymerase accessory subunit UL44. Interacts with host HSPA5.

It localises to the virion. Its subcellular location is the host cytoplasm. The protein resides in the host nucleus. Functionally, inhibits the establishment of the antiviral state in the infected cell. Prevents the phosphorylation of the host eukaryotic translation initiation factor eIF-2alpha/EIF2S1 and thus the shutoff of viral and cellular protein synthesis by directly interacting with EIF2AK2/PKR. Prevents stress granule formation in response to eIF-2alpha/EIF2S1 phosphorylation, thereby rescuing viral replication and protein synthesis. Also inhibits host autophagy by interacting with host Beclin-1/BECN1. This Human cytomegalovirus (strain Merlin) (HHV-5) protein is Protein TRS1 (TRS1).